The following is a 423-amino-acid chain: Serine--tRNA ligase (423 aa).

229 to 231 (TAE) provides a ligand contact to L-serine. 260–262 (RKE) lines the ATP pocket. Glu-283 lines the L-serine pocket. 347–350 (EVSS) contributes to the ATP binding site. Residue Ser-383 coordinates L-serine.

It belongs to the class-II aminoacyl-tRNA synthetase family. Type-1 seryl-tRNA synthetase subfamily. Homodimer. The tRNA molecule binds across the dimer.

Its subcellular location is the cytoplasm. The catalysed reaction is tRNA(Ser) + L-serine + ATP = L-seryl-tRNA(Ser) + AMP + diphosphate + H(+). It carries out the reaction tRNA(Sec) + L-serine + ATP = L-seryl-tRNA(Sec) + AMP + diphosphate + H(+). Its pathway is aminoacyl-tRNA biosynthesis; selenocysteinyl-tRNA(Sec) biosynthesis; L-seryl-tRNA(Sec) from L-serine and tRNA(Sec): step 1/1. In terms of biological role, catalyzes the attachment of serine to tRNA(Ser). Is also able to aminoacylate tRNA(Sec) with serine, to form the misacylated tRNA L-seryl-tRNA(Sec), which will be further converted into selenocysteinyl-tRNA(Sec). This is Serine--tRNA ligase from Chloroflexus aurantiacus (strain ATCC 29366 / DSM 635 / J-10-fl).